Reading from the N-terminus, the 379-residue chain is Chaperone protein DnaJ (379 aa).

Positions 7-72 constitute a J domain; sequence CYYETLEVDR…DKRAAYDRYG (66 aa). Residues 135 to 213 form a CR-type zinc finger; sequence GKTAQIEIPV…CSGAGRIERE (79 aa). Positions 148, 151, 165, 168, 187, 190, 201, and 204 each coordinate Zn(2+). 4 CXXCXGXG motif repeats span residues 148 to 155, 165 to 172, 187 to 194, and 201 to 208; these read CESCSGTG, CSMCGGAG, CPGCQGRG, and CPACSGAG.

Belongs to the DnaJ family. In terms of assembly, homodimer. It depends on Zn(2+) as a cofactor.

The protein resides in the cytoplasm. Participates actively in the response to hyperosmotic and heat shock by preventing the aggregation of stress-denatured proteins and by disaggregating proteins, also in an autonomous, DnaK-independent fashion. Unfolded proteins bind initially to DnaJ; upon interaction with the DnaJ-bound protein, DnaK hydrolyzes its bound ATP, resulting in the formation of a stable complex. GrpE releases ADP from DnaK; ATP binding to DnaK triggers the release of the substrate protein, thus completing the reaction cycle. Several rounds of ATP-dependent interactions between DnaJ, DnaK and GrpE are required for fully efficient folding. Also involved, together with DnaK and GrpE, in the DNA replication of plasmids through activation of initiation proteins. The sequence is that of Chaperone protein DnaJ from Rhodopseudomonas palustris (strain BisB18).